The primary structure comprises 506 residues: Maturase K (506 aa).

This sequence belongs to the intron maturase 2 family. MatK subfamily.

The protein resides in the plastid. The protein localises to the chloroplast. Usually encoded in the trnK tRNA gene intron. Probably assists in splicing its own and other chloroplast group II introns. This is Maturase K from Trifolium wormskioldii (Cows clover).